The following is a 418-amino-acid chain: Secreted aspartic protease 6 (418 aa).

The N-terminal stretch at 1 to 18 is a signal peptide; sequence MFLKNILSVLRFALLIDA. Residues 19-76 constitute a propeptide, activation peptide; it reads APVKRSPGFVTLDFNVKRSLVVPDDPTAESKRSPLFLDLDPTQIPVDDTGRNVGVDKR. The Peptidase A1 domain maps to 90-404; sequence YSADITVGSN…DLDDKKISMA (315 aa). D108 is a catalytic residue. A pepstatin A-binding site is contributed by 108 to 110; the sequence is DTG. C123 and C135 form a disulfide bridge. An N-linked (GlcNAc...) asparagine glycan is attached at N138. D268 is a Zn(2+) binding site. D294 is an active-site residue. 294-298 is a pepstatin A binding site; that stretch reads DSGTT. A disulfide bridge links C332 with C370.

Belongs to the peptidase A1 family.

The protein localises to the secreted. It carries out the reaction Preferential cleavage at the carboxyl of hydrophobic amino acids, but fails to cleave 15-Leu-|-Tyr-16, 16-Tyr-|-Leu-17 and 24-Phe-|-Phe-25 of insulin B chain. Activates trypsinogen, and degrades keratin.. Its activity is regulated as follows. Inhibited by pepstatin A analogs. Its function is as follows. Secreted aspartic peptidases (SAPs) are a group of ten acidic hydrolases considered as key virulence factors. These enzymes supply the fungus with nutrient amino acids as well as are able to degrade the selected host's proteins involved in the immune defense. Moreover, acts toward human hemoglobin though limited proteolysis to generate a variety of antimicrobial hemocidins, enabling to compete with the other microorganisms of the same physiological niche using the microbicidal peptides generated from the host protein. In Candida albicans (Yeast), this protein is Secreted aspartic protease 6.